The chain runs to 217 residues: Large ribosomal subunit protein uL1 (217 aa).

The residue at position 2 (S2) is an N-acetylserine. The residue at position 11 (Y11) is a Phosphotyrosine. Residues K91 and K106 each carry the N6-acetyllysine modification. K118 is subject to N6-acetyllysine; alternate. Residue K118 forms a Glycyl lysine isopeptide (Lys-Gly) (interchain with G-Cter in SUMO1); alternate linkage. A Glycyl lysine isopeptide (Lys-Gly) (interchain with G-Cter in SUMO2); alternate cross-link involves residue K118. K161 participates in a covalent cross-link: Glycyl lysine isopeptide (Lys-Gly) (interchain with G-Cter in SUMO2).

Belongs to the universal ribosomal protein uL1 family. As to quaternary structure, component of the large ribosomal subunit.

The protein localises to the cytoplasm. In terms of biological role, component of the large ribosomal subunit. The ribosome is a large ribonucleoprotein complex responsible for the synthesis of proteins in the cell. The protein is Large ribosomal subunit protein uL1 (Rpl10a) of Mus musculus (Mouse).